Consider the following 310-residue polypeptide: Epoxyqueuosine reductase (310 aa).

Asp133 acts as the Proton donor in catalysis. Residues Tyr179–Leu208 enclose the 4Fe-4S ferredoxin-type domain. Residues Cys188, Cys191, Cys194, Cys198, Cys214, Cys241, Cys244, and Cys248 each contribute to the [4Fe-4S] cluster site.

It belongs to the QueG family. Monomer. Cob(II)alamin is required as a cofactor. It depends on [4Fe-4S] cluster as a cofactor.

It is found in the cytoplasm. It catalyses the reaction epoxyqueuosine(34) in tRNA + AH2 = queuosine(34) in tRNA + A + H2O. The protein operates within tRNA modification; tRNA-queuosine biosynthesis. In terms of biological role, catalyzes the conversion of epoxyqueuosine (oQ) to queuosine (Q), which is a hypermodified base found in the wobble positions of tRNA(Asp), tRNA(Asn), tRNA(His) and tRNA(Tyr). The protein is Epoxyqueuosine reductase of Cyclobacterium marinum (strain ATCC 25205 / DSM 745 / LMG 13164 / NCIMB 1802) (Flectobacillus marinus).